A 221-amino-acid chain; its full sequence is Endonuclease V (221 aa).

The Mg(2+) site is built by Asp44 and Asp112.

It belongs to the endonuclease V family. It depends on Mg(2+) as a cofactor.

The protein localises to the cytoplasm. The enzyme catalyses Endonucleolytic cleavage at apurinic or apyrimidinic sites to products with a 5'-phosphate.. DNA repair enzyme involved in the repair of deaminated bases. Selectively cleaves double-stranded DNA at the second phosphodiester bond 3' to a deoxyinosine leaving behind the intact lesion on the nicked DNA. The polypeptide is Endonuclease V (Nostoc sp. (strain PCC 7120 / SAG 25.82 / UTEX 2576)).